The following is a 408-amino-acid chain: Histone acetyltransferase type B subunit 2 (408 aa).

WD repeat units follow at residues 120–160, 167–207, 213–253, 255–295, and 299–339; these read KHEQ…KDHG, YHKE…NKSP, VHTD…AIQK, SVSS…KPLH, and GHED…AEQQ. An interaction with the histone H4 N-terminus region spans residues 341–345; that stretch reads DDAYD. One copy of the WD 6 repeat lies at 356 to 396; sequence GHRSPVNEFSHNSNVPWLMCSVEEENVLQIWKPANKIVRPP.

It belongs to the WD repeat RBAP46/RBAP48/MSI1 family. As to quaternary structure, component of the HAT-B complex composed of at least HAT1 and HAT2. The HAT-B complex binds to histone H4 tail.

The protein localises to the cytoplasm. The protein resides in the nucleus. In terms of biological role, regulatory subunit of the histone acetylase B (HAT-B) complex. The complex acetylates 'Lys-12' of histone H4 which is required for telomeric silencing. In Kluyveromyces lactis (strain ATCC 8585 / CBS 2359 / DSM 70799 / NBRC 1267 / NRRL Y-1140 / WM37) (Yeast), this protein is Histone acetyltransferase type B subunit 2 (HAT2).